The primary structure comprises 371 residues: MNKLPHETRVVIGMSGGVDSSVAALLLKEQGYDVIGIFMKNWDDTDENGVCTATEDYNDVIEVCNQIGIPYYAVNFEKQYWDKVFTYFLDEYRAGRTPNPDVMCNKEIKFKAFLEHAIALGADYVATGHYARVAYMDGEYKMLRGVDDNKDQTYFLNQLSQEQLSKTMFPLGELKKPQIREMAKEAGLATAAKKDSTGICFIGERNFKDFLSNYLPAQPGVMQTLSGEVKGKHDGLMYYTIGQRHGLGIGGNGDPWFAVGKNLKENILYVDQGFHNELLYGDEVIATNVGWVSNEAKEKEFKCTAKFRYRQEDNKVTVQIVDENTVRILCDEPIRAITPGQAVVFYDGDECLGGATIDEVYRSGKKLDCLG.

Residues 13-20 (GMSGGVDS) and methionine 39 each bind ATP. The tract at residues 99–101 (NPD) is interaction with target base in tRNA. The active-site Nucleophile is the cysteine 104. Cysteine 104 and cysteine 200 are oxidised to a cystine. Residue glycine 128 coordinates ATP. The interval 150–152 (KDQ) is interaction with tRNA. Cysteine 200 acts as the Cysteine persulfide intermediate in catalysis. Residues 308–309 (RY) are interaction with tRNA.

This sequence belongs to the MnmA/TRMU family.

The protein resides in the cytoplasm. It catalyses the reaction S-sulfanyl-L-cysteinyl-[protein] + uridine(34) in tRNA + AH2 + ATP = 2-thiouridine(34) in tRNA + L-cysteinyl-[protein] + A + AMP + diphosphate + H(+). Catalyzes the 2-thiolation of uridine at the wobble position (U34) of tRNA, leading to the formation of s(2)U34. This chain is tRNA-specific 2-thiouridylase MnmA, found in Bacillus anthracis.